Consider the following 624-residue polypeptide: Mannosyl-oligosaccharide 1,2-alpha-mannosidase MNS3 (624 aa).

The Cytoplasmic portion of the chain corresponds to 1 to 43; that stretch reads MSKSLPYSVKDIHYDNAKFRHRSPLKVFSQSLLTLSTKRNYAS. The chain crosses the membrane as a helical; Signal-anchor for type II membrane protein span at residues 44-64; the sequence is CSTGKFLILILFFGVACLMLM. Over 65 to 624 the chain is Lumenal; that stretch reads SKSPNESGLN…AHPLPIRRNT (560 aa). N-linked (GlcNAc...) asparagine glycans are attached at residues N69 and N114. The interval 91–123 is disordered; sequence LRKPPRLPPRLSPDEGQLRGSSTNGSTISNSDP. Low complexity predominate over residues 110-121; that stretch reads GSSTNGSTISNS. The Proton donor role is filled by E212. A glycan (N-linked (GlcNAc...) asparagine) is linked at N236. Residue D357 is part of the active site. N377 carries an N-linked (GlcNAc...) asparagine glycan. A disulfide bridge links C428 with C471. The Proton donor role is filled by E485. Residue N503 is glycosylated (N-linked (GlcNAc...) asparagine). The active site involves E526. T613 contacts Ca(2+).

It belongs to the glycosyl hydrolase 47 family. The cofactor is Ca(2+). Mn(2+) serves as cofactor. Mg(2+) is required as a cofactor. Expressed in flowers, siliques, stems, leaves, roots, stamens and sepals.

It is found in the golgi apparatus. The protein resides in the cis-Golgi network membrane. It catalyses the reaction N(4)-(alpha-D-Man-(1-&gt;2)-alpha-D-Man-(1-&gt;2)-alpha-D-Man-(1-&gt;3)-[alpha-D-Man-(1-&gt;2)-alpha-D-Man-(1-&gt;3)-[alpha-D-Man-(1-&gt;2)-alpha-D-Man-(1-&gt;6)]-alpha-D-Man-(1-&gt;6)]-beta-D-Man-(1-&gt;4)-beta-D-GlcNAc-(1-&gt;4)-beta-D-GlcNAc)-L-asparaginyl-[protein] (N-glucan mannose isomer 9A1,2,3B1,2,3) + 4 H2O = N(4)-(alpha-D-Man-(1-&gt;3)-[alpha-D-Man-(1-&gt;3)-[alpha-D-Man-(1-&gt;6)]-alpha-D-Man-(1-&gt;6)]-beta-D-Man-(1-&gt;4)-beta-D-GlcNAc-(1-&gt;4)-beta-D-GlcNAc)-L-asparaginyl-[protein] (N-glucan mannose isomer 5A1,2) + 4 beta-D-mannose. It carries out the reaction N(4)-(alpha-D-Man-(1-&gt;2)-alpha-D-Man-(1-&gt;2)-alpha-D-Man-(1-&gt;3)-[alpha-D-Man-(1-&gt;3)-[alpha-D-Man-(1-&gt;2)-alpha-D-Man-(1-&gt;6)]-alpha-D-Man-(1-&gt;6)]-beta-D-Man-(1-&gt;4)-beta-D-GlcNAc-(1-&gt;4)-beta-D-GlcNAc)-L-asparaginyl-[protein] (N-glucan mannose isomer 8A1,2,3B1,3) + 3 H2O = N(4)-(alpha-D-Man-(1-&gt;3)-[alpha-D-Man-(1-&gt;3)-[alpha-D-Man-(1-&gt;6)]-alpha-D-Man-(1-&gt;6)]-beta-D-Man-(1-&gt;4)-beta-D-GlcNAc-(1-&gt;4)-beta-D-GlcNAc)-L-asparaginyl-[protein] (N-glucan mannose isomer 5A1,2) + 3 beta-D-mannose. The catalysed reaction is N(4)-(alpha-D-Man-(1-&gt;2)-alpha-D-Man-(1-&gt;2)-alpha-D-Man-(1-&gt;3)-[alpha-D-Man-(1-&gt;2)-alpha-D-Man-(1-&gt;3)-[alpha-D-Man-(1-&gt;2)-alpha-D-Man-(1-&gt;6)]-alpha-D-Man-(1-&gt;6)]-beta-D-Man-(1-&gt;4)-beta-D-GlcNAc-(1-&gt;4)-beta-D-GlcNAc)-L-asparaginyl-[protein] (N-glucan mannose isomer 9A1,2,3B1,2,3) + H2O = N(4)-(alpha-D-Man-(1-&gt;2)-alpha-D-Man-(1-&gt;2)-alpha-D-Man-(1-&gt;3)-[alpha-D-Man-(1-&gt;3)-[alpha-D-Man-(1-&gt;2)-alpha-D-Man-(1-&gt;6)]-alpha-D-Man-(1-&gt;6)]-beta-D-Man-(1-&gt;4)-beta-D-GlcNAc-(1-&gt;4)-beta-D-GlcNAc)-L-asparaginyl-[protein] (N-glucan mannose isomer 8A1,2,3B1,3) + beta-D-mannose. It functions in the pathway protein modification; protein glycosylation. With respect to regulation, inhibited by kifunensine and 1-deoxymannojirimycin, but not by swainsonine. In terms of biological role, class I alpha-mannosidase essential for early N-glycan processing. Removes preferentially alpha-1,2-linked mannose residues from Man(9)GlcNAc(2) to produce Man(8)GlcNAc(2). Involved in root development and cell wall biosynthesis. This chain is Mannosyl-oligosaccharide 1,2-alpha-mannosidase MNS3 (MNS3), found in Arabidopsis thaliana (Mouse-ear cress).